Reading from the N-terminus, the 237-residue chain is Sugar fermentation stimulation protein homolog (237 aa).

The protein belongs to the SfsA family.

The polypeptide is Sugar fermentation stimulation protein homolog (Methylobacterium radiotolerans (strain ATCC 27329 / DSM 1819 / JCM 2831 / NBRC 15690 / NCIMB 10815 / 0-1)).